Reading from the N-terminus, the 93-residue chain is DNA-binding protein Fis (93 aa).

Residues 74-93 (QTRAAQMMGINRGTLRKKLK) constitute a DNA-binding region (H-T-H motif).

The protein belongs to the transcriptional regulatory Fis family. As to quaternary structure, homodimer.

Its function is as follows. Activates ribosomal RNA transcription. Plays a direct role in upstream activation of rRNA promoters. The protein is DNA-binding protein Fis of Proteus vulgaris.